We begin with the raw amino-acid sequence, 182 residues long: ATP-dependent protease subunit HslV (182 aa).

Residue T6 is part of the active site. The Na(+) site is built by A164, C167, and T170.

It belongs to the peptidase T1B family. HslV subfamily. As to quaternary structure, a double ring-shaped homohexamer of HslV is capped on each side by a ring-shaped HslU homohexamer. The assembly of the HslU/HslV complex is dependent on binding of ATP.

Its subcellular location is the cytoplasm. It catalyses the reaction ATP-dependent cleavage of peptide bonds with broad specificity.. With respect to regulation, allosterically activated by HslU binding. In terms of biological role, protease subunit of a proteasome-like degradation complex believed to be a general protein degrading machinery. In Borreliella afzelii (strain PKo) (Borrelia afzelii), this protein is ATP-dependent protease subunit HslV.